Consider the following 620-residue polypeptide: Eukaryotic translation initiation factor 2-alpha kinase 1 (620 aa).

Residues 1–38 form a disordered region; that stretch reads MLGGGSVDGERDTDDDAAGAVAAPPAIDFPAEVSDPKY. Low complexity predominate over residues 18–28; that stretch reads AGAVAAPPAID. Positions 85 to 104 match the SIFI-degron motif; sequence LHSKQVFKLLCQTFIKMGLL. Residues 167–581 enclose the Protein kinase domain; the sequence is FEELAILGKG…ALQLLQSELF (415 aa). Residues 173-181 and Lys-196 each bind ATP; that span reads LGKGGYGRV. Residue Thr-283 is modified to Phosphothreonine. Residues 408-413 form an HRM 1 repeat; sequence ACPYVM. The active-site Proton acceptor is Asp-440. A phosphothreonine; by autocatalysis mark is found at Thr-484 and Thr-486. A Phosphothreonine modification is found at Thr-491. One copy of the HRM 2 repeat lies at 550-555; sequence RCPVQA.

Belongs to the protein kinase superfamily. Ser/Thr protein kinase family. GCN2 subfamily. In terms of assembly, synthesized in an inactive form that binds to the N-terminal domain of CDC37. Has to be associated with a multiprotein complex containing Hsp90, CDC37 and PPP5C for maturation and activation by autophosphorylation. The phosphatase PPP5C modulates this activation. Homodimer; homodimerizes in presence of heme, forming a disulfide-linked inactive homodimer. Interacts with DELE1; binds both to full-length DELE1 and processed form of DELE1 (S-DELE1) in response to stress, leading to activate its protein kinase activity and trigger the integrated stress response (ISR). In terms of processing, activated by autophosphorylation; phosphorylated predominantly on serine and threonine residues, but also on tyrosine residues. Autophosphorylation at Thr-486 is required for kinase activation. The active autophosphorylated form apparently is largely refractory to cellular heme fluctuations. Ubiquitinated and degraded by the SIFI complex once the mitochondrial stress has been resolved, thereby providing stress response silencing. Within the SIFI complex, UBR4 initiates ubiquitin chain that are further elongated or branched by KCMF1.

The protein resides in the cytoplasm. It carries out the reaction L-seryl-[protein] + ATP = O-phospho-L-seryl-[protein] + ADP + H(+). The enzyme catalyses L-threonyl-[protein] + ATP = O-phospho-L-threonyl-[protein] + ADP + H(+). In normal conditions, the protein kinase activity is inhibited; inhibition is relieved by various stress conditions. Inhibited by heme: in presence of heme, forms a disulfide-linked inactive homodimer. Heme depletion relieves inhibition and stimulates kinase activity by autophosphorylation. Inhibited by the heme metabolites biliverdin and bilirubin. Induced by oxidative stress generated by arsenite treatment. Binding of nitric oxide (NO) to the heme iron in the N-terminal heme-binding domain activates the kinase activity, while binding of carbon monoxide (CO) suppresses kinase activity. Protein kinase activity is also activated upon binding to DELE1 in response to various stress, triggering the integrated stress response (ISR): activated by full-length DELE1 in response to iron deficiency, while it is activated by the processed form of DELE1 (S-DELE1) in response to mitochondrial stress. In terms of biological role, metabolic-stress sensing protein kinase that phosphorylates the alpha subunit of eukaryotic translation initiation factor 2 (EIF2S1/eIF-2-alpha) in response to various stress conditions. Key activator of the integrated stress response (ISR) required for adaptation to various stress, such as heme deficiency, oxidative stress, osmotic shock, mitochondrial dysfunction and heat shock. EIF2S1/eIF-2-alpha phosphorylation in response to stress converts EIF2S1/eIF-2-alpha in a global protein synthesis inhibitor, leading to a global attenuation of cap-dependent translation, while concomitantly initiating the preferential translation of ISR-specific mRNAs, such as the transcriptional activator ATF4, and hence allowing ATF4-mediated reprogramming. Acts as a key sensor of heme-deficiency: in normal conditions, binds hemin via a cysteine thiolate and histidine nitrogenous coordination, leading to inhibit the protein kinase activity. This binding occurs with moderate affinity, allowing it to sense the heme concentration within the cell: heme depletion relieves inhibition and stimulates kinase activity, activating the ISR. Thanks to this unique heme-sensing capacity, plays a crucial role to shut off protein synthesis during acute heme-deficient conditions. In red blood cells (RBCs), controls hemoglobin synthesis ensuring a coordinated regulation of the synthesis of its heme and globin moieties. It thereby plays an essential protective role for RBC survival in anemias of iron deficiency. Iron deficiency also triggers activation by full-length DELE1. Also activates the ISR in response to mitochondrial dysfunction: HRI/EIF2AK1 protein kinase activity is activated upon binding to the processed form of DELE1 (S-DELE1), thereby promoting the ATF4-mediated reprogramming. Also acts as an activator of mitophagy in response to mitochondrial damage: catalyzes phosphorylation of eIF-2-alpha (EIF2S1) following activation by S-DELE1, thereby promoting mitochondrial localization of EIF2S1, triggering PRKN-independent mitophagy. The polypeptide is Eukaryotic translation initiation factor 2-alpha kinase 1 (Rattus norvegicus (Rat)).